The sequence spans 83 residues: MKKNSVISQEEKKGSAAFQVFGFTNKIRRLSAHLELHKKDYSSQRGLRKILGKRQRLLAYFSKKNRVRYKELINQLNIREIKR.

This sequence belongs to the universal ribosomal protein uS15 family. Part of the 30S ribosomal subunit.

It is found in the plastid. The protein resides in the chloroplast. This is Small ribosomal subunit protein uS15c (rps15) from Fagopyrum esculentum subsp. ancestrale (Wild buckwheat).